The primary structure comprises 414 residues: Probable elongation factor 1-gamma 1 (414 aa).

Residues Met-1–Ser-82 form the GST N-terminal domain. The GST C-terminal domain maps to Ser-87–Ile-215. The span at Pro-214–Ala-224 shows a compositional bias: low complexity. Residues Pro-214–Leu-260 form a disordered region. Over residues Lys-225 to Pro-236 the composition is skewed to basic and acidic residues. In terms of domain architecture, EF-1-gamma C-terminal spans Ala-254–Lys-414.

In terms of assembly, EF-1 is composed of four subunits: alpha, beta, delta, and gamma.

In terms of biological role, probably plays a role in anchoring the complex to other cellular components. The chain is Probable elongation factor 1-gamma 1 from Arabidopsis thaliana (Mouse-ear cress).